The chain runs to 311 residues: NAD kinase (311 aa).

Residue Asp67 is the Proton acceptor of the active site. Residues 67-68 (DG), Arg72, 140-141 (ND), Arg151, Asp170, 181-186 (TAYSLS), and Gln240 each bind NAD(+). Positions 278–287 (LKEGGSRQDD) are enriched in basic and acidic residues. Positions 278-311 (LKEGGSRQDDENPAATVNPETDSKYPHSHPGSTG) are disordered.

This sequence belongs to the NAD kinase family. The cofactor is a divalent metal cation.

The protein localises to the cytoplasm. It catalyses the reaction NAD(+) + ATP = ADP + NADP(+) + H(+). Involved in the regulation of the intracellular balance of NAD and NADP, and is a key enzyme in the biosynthesis of NADP. Catalyzes specifically the phosphorylation on 2'-hydroxyl of the adenosine moiety of NAD to yield NADP. This Moorella thermoacetica (strain ATCC 39073 / JCM 9320) protein is NAD kinase.